The sequence spans 364 residues: 3-isopropylmalate dehydrogenase (364 aa).

79 to 92 contacts NAD(+); it reads GPKWEHLPPDQQPE. Substrate contacts are provided by Arg100, Arg110, Arg139, and Asp228. Mg(2+) is bound by residues Asp228, Asp252, and Asp256. 286–298 is a binding site for NAD(+); that stretch reads GSAPDIAGKNIAN.

Belongs to the isocitrate and isopropylmalate dehydrogenases family. LeuB type 1 subfamily. Homodimer. Mg(2+) is required as a cofactor. The cofactor is Mn(2+).

It localises to the cytoplasm. The catalysed reaction is (2R,3S)-3-isopropylmalate + NAD(+) = 4-methyl-2-oxopentanoate + CO2 + NADH. Its pathway is amino-acid biosynthesis; L-leucine biosynthesis; L-leucine from 3-methyl-2-oxobutanoate: step 3/4. Functionally, catalyzes the oxidation of 3-carboxy-2-hydroxy-4-methylpentanoate (3-isopropylmalate) to 3-carboxy-4-methyl-2-oxopentanoate. The product decarboxylates to 4-methyl-2 oxopentanoate. The protein is 3-isopropylmalate dehydrogenase of Escherichia coli (strain UTI89 / UPEC).